The following is a 483-amino-acid chain: Glutamyl-tRNA(Gln) amidotransferase subunit A (483 aa).

Catalysis depends on charge relay system residues Lys76 and Ser151. Ser175 (acyl-ester intermediate) is an active-site residue.

The protein belongs to the amidase family. GatA subfamily. As to quaternary structure, heterotrimer of A, B and C subunits.

It catalyses the reaction L-glutamyl-tRNA(Gln) + L-glutamine + ATP + H2O = L-glutaminyl-tRNA(Gln) + L-glutamate + ADP + phosphate + H(+). Functionally, allows the formation of correctly charged Gln-tRNA(Gln) through the transamidation of misacylated Glu-tRNA(Gln) in organisms which lack glutaminyl-tRNA synthetase. The reaction takes place in the presence of glutamine and ATP through an activated gamma-phospho-Glu-tRNA(Gln). The polypeptide is Glutamyl-tRNA(Gln) amidotransferase subunit A (Pseudomonas putida (strain ATCC 47054 / DSM 6125 / CFBP 8728 / NCIMB 11950 / KT2440)).